A 310-amino-acid chain; its full sequence is 4-diphosphocytidyl-2-C-methyl-D-erythritol kinase (310 aa).

Residue lysine 20 is part of the active site. Residue 106–116 participates in ATP binding; sequence PMGGGLGGGSS. Aspartate 148 is an active-site residue.

The protein belongs to the GHMP kinase family. IspE subfamily. Homodimer.

It carries out the reaction 4-CDP-2-C-methyl-D-erythritol + ATP = 4-CDP-2-C-methyl-D-erythritol 2-phosphate + ADP + H(+). Its pathway is isoprenoid biosynthesis; isopentenyl diphosphate biosynthesis via DXP pathway; isopentenyl diphosphate from 1-deoxy-D-xylulose 5-phosphate: step 3/6. Its function is as follows. Catalyzes the phosphorylation of the position 2 hydroxy group of 4-diphosphocytidyl-2C-methyl-D-erythritol. This chain is 4-diphosphocytidyl-2-C-methyl-D-erythritol kinase, found in Yersinia pseudotuberculosis serotype O:3 (strain YPIII).